The chain runs to 127 residues: Aspartate 1-decarboxylase (127 aa).

Ser25 (schiff-base intermediate with substrate; via pyruvic acid) is an active-site residue. Ser25 bears the Pyruvic acid (Ser) mark. Thr57 lines the substrate pocket. Residue Tyr58 is the Proton donor of the active site. 73–75 (GAA) contacts substrate.

This sequence belongs to the PanD family. In terms of assembly, heterooctamer of four alpha and four beta subunits. Requires pyruvate as cofactor. In terms of processing, is synthesized initially as an inactive proenzyme, which is activated by self-cleavage at a specific serine bond to produce a beta-subunit with a hydroxyl group at its C-terminus and an alpha-subunit with a pyruvoyl group at its N-terminus.

The protein resides in the cytoplasm. It carries out the reaction L-aspartate + H(+) = beta-alanine + CO2. It functions in the pathway cofactor biosynthesis; (R)-pantothenate biosynthesis; beta-alanine from L-aspartate: step 1/1. Catalyzes the pyruvoyl-dependent decarboxylation of aspartate to produce beta-alanine. This chain is Aspartate 1-decarboxylase, found in Clostridium botulinum (strain Loch Maree / Type A3).